The primary structure comprises 289 residues: 4-diphosphocytidyl-2-C-methyl-D-erythritol kinase (289 aa).

Residue K10 is part of the active site. 94-104 (PVAAGLAGGSS) contributes to the ATP binding site. The active site involves D136.

The protein belongs to the GHMP kinase family. IspE subfamily.

It carries out the reaction 4-CDP-2-C-methyl-D-erythritol + ATP = 4-CDP-2-C-methyl-D-erythritol 2-phosphate + ADP + H(+). It functions in the pathway isoprenoid biosynthesis; isopentenyl diphosphate biosynthesis via DXP pathway; isopentenyl diphosphate from 1-deoxy-D-xylulose 5-phosphate: step 3/6. Catalyzes the phosphorylation of the position 2 hydroxy group of 4-diphosphocytidyl-2C-methyl-D-erythritol. This Bacillus mycoides (strain KBAB4) (Bacillus weihenstephanensis) protein is 4-diphosphocytidyl-2-C-methyl-D-erythritol kinase.